The sequence spans 304 residues: Cbb3-type cytochrome c oxidase subunit CcoP (304 aa).

Transmembrane regions (helical) follow at residues 11–31 and 61–81; these read LYVA…LIVA and WWAG…ALYP. Cytochrome c domains follow at residues 129–209 and 216–296; these read QAMA…LSLS and VAAQ…WSLS. Positions 142, 145, 146, 185, 228, 231, 232, and 273 each coordinate heme c.

It belongs to the CcoP / FixP family. As to quaternary structure, component of the cbb3-type cytochrome c oxidase at least composed of CcoN, CcoO, CcoQ and CcoP. It depends on heme c as a cofactor.

It localises to the cell inner membrane. It participates in energy metabolism; oxidative phosphorylation. Functionally, C-type cytochrome. Part of the cbb3-type cytochrome c oxidase complex. CcoP subunit is required for transferring electrons from donor cytochrome c via its heme groups to CcoO subunit. From there, electrons are shuttled to the catalytic binuclear center of CcoN subunit where oxygen reduction takes place. The complex also functions as a proton pump. This Rubrivivax gelatinosus (Rhodocyclus gelatinosus) protein is Cbb3-type cytochrome c oxidase subunit CcoP.